The primary structure comprises 207 residues: Small ribosomal subunit protein uS4 (207 aa).

The 64-residue stretch at 96–159 (RRLDNVVYRL…RASTFIADNI (64 aa)) folds into the S4 RNA-binding domain.

The protein belongs to the universal ribosomal protein uS4 family. As to quaternary structure, part of the 30S ribosomal subunit. Contacts protein S5. The interaction surface between S4 and S5 is involved in control of translational fidelity.

Functionally, one of the primary rRNA binding proteins, it binds directly to 16S rRNA where it nucleates assembly of the body of the 30S subunit. In terms of biological role, with S5 and S12 plays an important role in translational accuracy. The protein is Small ribosomal subunit protein uS4 of Leptospira borgpetersenii serovar Hardjo-bovis (strain JB197).